A 182-amino-acid chain; its full sequence is Large ribosomal subunit protein uL6 (182 aa).

It belongs to the universal ribosomal protein uL6 family. Part of the 50S ribosomal subunit.

This protein binds to the 23S rRNA, and is important in its secondary structure. It is located near the subunit interface in the base of the L7/L12 stalk, and near the tRNA binding site of the peptidyltransferase center. The chain is Large ribosomal subunit protein uL6 from Aeropyrum pernix (strain ATCC 700893 / DSM 11879 / JCM 9820 / NBRC 100138 / K1).